A 148-amino-acid polypeptide reads, in one-letter code: MSSQEEIVIVDATNQILGRMSTHIAKLLKSGKKVYVVNAEKAIISGPRSRVLEGYSLLFTVKTMQNPYRQGIRRPRNPINIVKRTVRGMLPKNKLGKQIYRNLKAYIGIPKELEGKSMIRFDDADVSRLKGKYITVAELSRLLGGLKQ.

This sequence belongs to the universal ribosomal protein uL13 family. As to quaternary structure, part of the 50S ribosomal subunit.

This protein is one of the early assembly proteins of the 50S ribosomal subunit, although it is not seen to bind rRNA by itself. It is important during the early stages of 50S assembly. The sequence is that of Large ribosomal subunit protein uL13 from Sulfolobus acidocaldarius (strain ATCC 33909 / DSM 639 / JCM 8929 / NBRC 15157 / NCIMB 11770).